Consider the following 199-residue polypeptide: MSSGNAKIGYPAPNFKATAVMPDGQFKDISLSEYKGKYVVFFFYPLDFTFVCPTEIIAFSDRADEFKKLNCQVIGASVDSHFCHLAWINTPKKQGGLGPMNIPLISDPKRTIAQDYGVLKADEGISFRGLFIIDDKGILRQITINDLPVGRSVDEIIRLVQAFQFTDKHGEVCPAGWKPGSDTIKPDVNKSKEYFSKQK.

Serine 2 carries the post-translational modification N-acetylserine. Positions 6-165 constitute a Thioredoxin domain; sequence AKIGYPAPNF…IIRLVQAFQF (160 aa). Lysine 7 bears the N6-acetyllysine; alternate mark. Lysine 7 is covalently cross-linked (Glycyl lysine isopeptide (Lys-Gly) (interchain with G-Cter in SUMO2); alternate). 2 positions are modified to N6-acetyllysine: lysine 16 and lysine 27. A Phosphoserine modification is found at serine 32. Lysine 35 is subject to N6-acetyllysine; alternate. An N6-succinyllysine; alternate modification is found at lysine 35. Residue cysteine 52 is the Cysteine sulfenic acid (-SOH) intermediate of the active site. The residue at position 90 (threonine 90) is a Phosphothreonine. Lysine 120 is covalently cross-linked (Glycyl lysine isopeptide (Lys-Gly) (interchain with G-Cter in SUMO2)). An N6-acetyllysine modification is found at lysine 136. Residue lysine 185 forms a Glycyl lysine isopeptide (Lys-Gly) (interchain with G-Cter in SUMO1) linkage. Lysine 197 bears the N6-acetyllysine mark.

It belongs to the peroxiredoxin family. AhpC/Prx1 subfamily. As to quaternary structure, homodimer; disulfide-linked, upon oxidation. 5 homodimers assemble to form a ring-like decamer. Interacts with GDPD5; forms a mixed-disulfide with GDPD5. Interacts with SESN1 and SESN2. Interacts with FAM107A. Phosphorylated on Thr-90 during the M-phase, which leads to a decrease in enzymatic activity. In terms of processing, acetylation increases reducing activity and resistance to superoxidation. Deacetylated by HDAC6 which decreases reducing activity. In terms of tissue distribution, found in various tissues; high concentration in liver.

It localises to the cytoplasm. It catalyses the reaction a hydroperoxide + [thioredoxin]-dithiol = an alcohol + [thioredoxin]-disulfide + H2O. Its function is as follows. Thiol-specific peroxidase that catalyzes the reduction of hydrogen peroxide and organic hydroperoxides to water and alcohols, respectively. Plays a role in cell protection against oxidative stress by detoxifying peroxides and as sensor of hydrogen peroxide-mediated signaling events. Might participate in the signaling cascades of growth factors and tumor necrosis factor-alpha by regulating the intracellular concentrations of H(2)O(2). Reduces an intramolecular disulfide bond in GDPD5 that gates the ability to GDPD5 to drive postmitotic motor neuron differentiation. This is Peroxiredoxin-1 (Prdx1) from Mus musculus (Mouse).